Here is a 131-residue protein sequence, read N- to C-terminus: Large-conductance mechanosensitive channel (131 aa).

Helical transmembrane passes span 8-28 (FAIR…GAFG), 30-50 (IVSS…LGGI), and 67-87 (GAFI…FLFV).

This sequence belongs to the MscL family. In terms of assembly, homopentamer.

The protein localises to the cell membrane. In terms of biological role, channel that opens in response to stretch forces in the membrane lipid bilayer. May participate in the regulation of osmotic pressure changes within the cell. The sequence is that of Large-conductance mechanosensitive channel from Geobacillus kaustophilus (strain HTA426).